The primary structure comprises 149 residues: Ricin B-like lectin (149 aa).

S2 carries the post-translational modification N-acetylserine. Residues D21, G24, N39, and N47 each contribute to the a carbohydrate site. The tract at residues P110–L112 is involved in dimerization.

Homodimer. Post-translationally, the N-terminus is blocked.

Functionally, lectin specific for terminal, non-reducing N-acetylgalactosamine (Gal-NAc)-containing carbohydrates including N,N'-diacetyllactosediamine/LDN (GalNAcbeta1-4GlcNAc, LacdiNAc). Specific also for carbohydrates containing N-acetylglucosamine (-GlcNAc) or N-acetyllactosamine (-Galbeta1-4GlcNAc) at the reducing end. Agglutinates human blood group A, AB, B and O erythrocytes with a strong preference for group A. Agglutinates bovine erythrocytes with a very low specificity. Binds carbohydrates bivalently, which is required for its biological activity. Exhibits insecticidal activity against the fruit fly D.melanogaster, mosquito A.aegypti, and amoebozoa A.castellanii. Has anti-nutritional activity against Colorado potato beetle L.decemlineata, and against worm C.elegans. Has antiproliferative activity against human leukemic T-cells. Has an immunostimulatory effect on human antigen-presenting dendritic cells, which are subsequently able to induce efficient T-cell immune responses. The polypeptide is Ricin B-like lectin (Clitocybe nebularis (Clouded agaric)).